The primary structure comprises 425 residues: Serine--tRNA ligase 2 (425 aa).

Position 234 to 236 (234 to 236) interacts with L-serine; it reads TAE. 265–267 contributes to the ATP binding site; sequence RVE. E288 serves as a coordination point for L-serine. 352-355 serves as a coordination point for ATP; sequence EVSS. S388 contacts L-serine.

It belongs to the class-II aminoacyl-tRNA synthetase family. Type-1 seryl-tRNA synthetase subfamily. In terms of assembly, homodimer. The tRNA molecule binds across the dimer.

Its subcellular location is the cytoplasm. The enzyme catalyses tRNA(Ser) + L-serine + ATP = L-seryl-tRNA(Ser) + AMP + diphosphate + H(+). It catalyses the reaction tRNA(Sec) + L-serine + ATP = L-seryl-tRNA(Sec) + AMP + diphosphate + H(+). The protein operates within aminoacyl-tRNA biosynthesis; selenocysteinyl-tRNA(Sec) biosynthesis; L-seryl-tRNA(Sec) from L-serine and tRNA(Sec): step 1/1. In terms of biological role, catalyzes the attachment of serine to tRNA(Ser). Is also able to aminoacylate tRNA(Sec) with serine, to form the misacylated tRNA L-seryl-tRNA(Sec), which will be further converted into selenocysteinyl-tRNA(Sec). This chain is Serine--tRNA ligase 2, found in Clostridium acetobutylicum (strain ATCC 824 / DSM 792 / JCM 1419 / IAM 19013 / LMG 5710 / NBRC 13948 / NRRL B-527 / VKM B-1787 / 2291 / W).